The chain runs to 188 residues: Der GTPase-activating protein YihI (188 aa).

Disordered regions lie at residues 1-80 (MKQP…VPVP) and 162-188 (DEDD…KDTF). Basic and acidic residues predominate over residues 27-37 (TRDELDAEARD). Over residues 47–57 (NRSGARTNVEG) the composition is skewed to polar residues.

The protein belongs to the YihI family. As to quaternary structure, interacts with Der.

A GTPase-activating protein (GAP) that modifies Der/EngA GTPase function. May play a role in ribosome biogenesis. This Yersinia pseudotuberculosis serotype O:1b (strain IP 31758) protein is Der GTPase-activating protein YihI.